We begin with the raw amino-acid sequence, 170 residues long: MASVLIREAKEGDCGNILRMIRELAEYEKLSDQVKISEEALRADGFGENPFFHCLVAEILPAPGEPQGSCMVGYGLYYFIYSTWTGRNIYLEDIYVKPEYRGQGIGSKIIKKVAEVALDKGCSQFRLAVLDWNKKAVDLYKTLGARDLTEAEGWHSFRFEGEAMRELAGK.

The 163-residue stretch at 4–166 (VLIREAKEGD…FRFEGEAMRE (163 aa)) folds into the N-acetyltransferase domain. 27–28 (YE) serves as a coordination point for substrate. Residue Lys-29 is modified to N6-acetyllysine. Glu-92 is a binding site for substrate. Residues 94–96 (IYV), 102–107 (GQGIGS), 133–135 (NKK), and Tyr-140 each bind acetyl-CoA. Catalysis depends on Tyr-140, which acts as the Proton donor. Glu-152 provides a ligand contact to substrate.

The protein belongs to the acetyltransferase family. As to quaternary structure, homodimer.

It is found in the cytoplasm. It catalyses the reaction S-(2-aminoethyl)-L-cysteine + acetyl-CoA = S-(2-acetamidoethyl)-L-cysteine + CoA + H(+). The enzyme catalyses an alkane-alpha,omega-diamine + acetyl-CoA = an N-acetylalkane-alpha,omega-diamine + CoA + H(+). In terms of biological role, catalyzes the N-acetylation of the amino acid thialysine (S-(2-aminoethyl)-L-cysteine), a L-lysine analog with the 4-methylene group substituted with a sulfur. May also catalyze acetylation of polyamines, such as norspermidine, spermidine or spermine. However, ability to acetylate polyamines is weak, suggesting that it does not act as a diamine acetyltransferase in vivo. This is Thialysine N-epsilon-acetyltransferase from Sus scrofa (Pig).